The sequence spans 190 residues: Heme-binding protein 1 (190 aa).

It belongs to the HEBP family. In terms of assembly, monomer. In terms of tissue distribution, ubiquitously expressed. Extremely abundant in liver.

Its subcellular location is the cytoplasm. Its function is as follows. May bind free porphyrinogens that may be present in the cell and thus facilitate removal of these potentially toxic compound. Binds with a high affinity to one molecule of heme or porphyrins. It binds metalloporphyrins, free porphyrins and N-methylprotoporphyrin with similar affinities. The chain is Heme-binding protein 1 (Hebp1) from Mus musculus (Mouse).